We begin with the raw amino-acid sequence, 220 residues long: MGAAARSLRLALGLLLLATLLRPADACSCSPVHPQQAFCNADVVIRAKAVSEKEVDSGNDIYGNPIKRIQYEIKQIKMFKGPDKDIEFIYTAPSSAVCGVSLDVGGKKEYLIAGKAEGDGKMHITLCDFIVPWDTLSITQKKSLNHRYQMGCECKITRCPMIPCYISSPDECLWMDWVTEKSINGHQAKFFACIKRSDGSCAWYRGAAPPKQEFLDIEDP.

The first 26 residues, 1-26, serve as a signal peptide directing secretion; sequence MGAAARSLRLALGLLLLATLLRPADA. Cys27 provides a ligand contact to Zn(2+). Involved in metalloproteinase-binding stretches follow at residues 27–30 and 95–96; these read CSCS and SA. Disulfide bonds link Cys27–Cys98, Cys29–Cys127, Cys39–Cys152, Cys154–Cys201, Cys159–Cys164, and Cys172–Cys193. The NTR domain occupies 27 to 152; it reads CSCSPVHPQQ…SLNHRYQMGC (126 aa).

It belongs to the protease inhibitor I35 (TIMP) family. In terms of assembly, interacts (via the C-terminal) with MMP2 (via the C-terminal PEX domain); the interaction inhibits the MMP2 activity. Post-translationally, the activity of TIMP2 is dependent on the presence of disulfide bonds.

It localises to the secreted. In terms of biological role, complexes with metalloproteinases (such as collagenases) and irreversibly inactivates them by binding to their catalytic zinc cofactor. The protein is Metalloproteinase inhibitor 2 (Timp2) of Rattus norvegicus (Rat).